A 258-amino-acid polypeptide reads, in one-letter code: Exosome complex component Rrp41 (258 aa).

Belongs to the RNase PH family. Rrp41 subfamily. Component of the archaeal exosome complex. Forms a hexameric ring-like arrangement composed of 3 Rrp41-Rrp42 heterodimers. The hexameric ring associates with a trimer of Rrp4 and/or Csl4 subunits.

It is found in the cytoplasm. Its function is as follows. Catalytic component of the exosome, which is a complex involved in RNA degradation. Has 3'-&gt;5' exoribonuclease activity. Can also synthesize heteromeric RNA-tails. In Archaeoglobus fulgidus (strain ATCC 49558 / DSM 4304 / JCM 9628 / NBRC 100126 / VC-16), this protein is Exosome complex component Rrp41.